A 405-amino-acid polypeptide reads, in one-letter code: uncharacterized protein (405 aa).

This sequence belongs to the UDP-glycosyltransferase family.

This is an uncharacterized protein from Bacillus subtilis (strain 168).